We begin with the raw amino-acid sequence, 609 residues long: MGRTNTSDQLNAISDKNTKRKSLALDNEYHNNSSSEDDSSKIELSYTIPDNNNIISQETTTSVEDVLSLSSAPQNELRLRKQKSNNQDSPVDLNGVIVDVSKREKIFLKRKRQIDNKHGSDKSKYLSRFNDITFKAKSSTIFESDEFYKTDFFGMYVLFWLATAFAMVNNLIHTYFENSTPILQWTVVKVFKRDLFKVGLVDLAMYLSTYFAFFVQYACKNGYLSWKKVGWWLQAAFDGLFLFFWLWIASEYCLDFPWIAKVFLVLHSLVFIMKMHSYAFYNGYLWSIYKEGLYSEKYLDKLTNGKVTLPKGHTKNETEKVLQESIAFTKYELEYQSHATTENPDDHHVFDIDQTDKSIAKLQQEGLIKFPQNITLFNYFEYSMFPTLVYTLNFPRTKRIRWSYVFGKTFGIFGLIFLMILIAENNLYPIVLRCEIARKLPVSERIPQYFFLLMDMIPPFLMVYLFTFFLIWDAILNAIAELSKFADRDFYGPWWSCTDFSEFANQWNRCVHKFLLRHVYHSSISAFDVNKQSAAIITFLLSSLVHELVMYVIFGTLRGYLLLFQMSQIPLIIMSRSKFMKDKKVLGNIICWFGFISGPSIICTLYLVF.

Residues 1–15 (MGRTNTSDQLNAISD) show a composition bias toward polar residues. The interval 1–41 (MGRTNTSDQLNAISDKNTKRKSLALDNEYHNNSSSEDDSSK) is disordered. The next 6 helical transmembrane spans lie at 152–172 (FFGMYVLFWLATAFAMVNNLI), 195–215 (LFKVGLVDLAMYLSTYFAFFV), 229–249 (VGWWLQAAFDGLFLFFWLWIA), 253–273 (CLDFPWIAKVFLVLHSLVFIM), 402–422 (WSYVFGKTFGIFGLIFLMILI), and 451–471 (FLLMDMIPPFLMVYLFTFFLI). Residues 490–496 (FYGPWWS) carry the FYXDWWN motif motif. The next 2 membrane-spanning stretches (helical) occupy residues 534 to 554 (AAIITFLLSSLVHELVMYVIF) and 589 to 609 (IICWFGFISGPSIICTLYLVF). Residue His-546 is part of the active site.

Belongs to the membrane-bound acyltransferase family. Sterol o-acyltransferase subfamily.

Its subcellular location is the endoplasmic reticulum membrane. Its activity is regulated as follows. Inhibited by the protoberberine derivative HWY-289 in a non-competitive manner. Inhibited by miconazole. Not inhibited by CI-976, polyoxin D, amphotericin B or nikkomycin Z. In terms of biological role, sterol O-acyltransferase that catalyzes the formation of stery esters. This is Sterol O-acyltransferase 2 from Candida albicans (Yeast).